Reading from the N-terminus, the 904-residue chain is MEWGSESAAVRRHRVGVERREGAAAAPPPEREARAQEPLVDGCSGGGRTRKRSPGGSGGASRGAGTGLSEVRAALGLALYLIALRTLVQLSLQQLVLRGAAGHRGEFDALQARDYLEHITSIGPRTTGSPENEILTVHYLLEQIKLIEVQSNSLHKISVDVQRPTGSFSIDFLGGFTSYYDNITNVVVKLEPRDGAQHAVLANCHFDSVANSPGASDDAVSCSVMLEVLRVLSTSSEALHHAVIFLFNGAEENVLQASHGFITQHPWASLIRAFINLEAAGVGGKELVFQTGPENPWLVQAYVSAAKHPFASVVAQEVFQSGIIPSDTDFRIYRDFGNIPGIDLAFIENGYIYHTKYDTADRILTDSIQRAGDNILAVLKHLATSDMLAAASKYRHGNMVFFDVLGLFVIAYPSRIGSIINYMVVMGVVLYLGKKFLQPKHKTGNYKKDFLCGLGITLISWFTSLVTVLIIAVFISLIGQSLSWYNHFYVSVCLYGTATVAKIILIHTLAKRFYYMNASAQYLGEVFFDISLFVHCCFLVTLTYQGLCSAFISAVWVAFPLLTKLCVHKDFKQHGAQGKFIAFYLLGMFIPYLYALYLIWAVFEMFTPILGRSGSEIPPDVVLASILAGCTMILSSYFINFIYLAKSTKKTMLTLTLVCAITFLLVCSGTFFPYSSNPANPKPKRVFLQHMTRTFHDLEGNAVKRDSGIWINGFDYTGISHITPHIPEINDSIRAHCEENAPLCGFPWYLPVHFLIRKNWYLPAPEVSPRNPPHFRLISKEQTPWDSIKLTFEATGPSHMSFYVRAHKGSTLSQWSLGNGTPVTSKGGDYFVFYSHGLQASAWQFWIEVQVSEEHPEGMVTVAIAAHYLSGEDKRSPQLDALKEKFPDWTFPSAWVCTYDLFVF.

Met1 carries the post-translational modification N-acetylmethionine. Topologically, residues 1–63 (MEWGSESAAV…PGGSGGASRG (63 aa)) are cytoplasmic. A disordered region spans residues 1-65 (MEWGSESAAV…GSGGASRGAG (65 aa)). Residues 55-65 (GGSGGASRGAG) show a composition bias toward gly residues. The chain crosses the membrane as a helical span at residues 64–84 (AGTGLSEVRAALGLALYLIAL). Topologically, residues 85–399 (RTLVQLSLQQ…AASKYRHGNM (315 aa)) are lumenal. A glycan (N-linked (GlcNAc...) asparagine) is linked at Asn182. Cysteines 204 and 222 form a disulfide. Residues His205 and Asp217 each coordinate Zn(2+). Glu251 acts as the Proton acceptor in catalysis. Zn(2+) is bound by residues Glu252, Glu278, and His354. A helical membrane pass occupies residues 400-420 (VFFDVLGLFVIAYPSRIGSII). Residues 421 to 457 (NYMVVMGVVLYLGKKFLQPKHKTGNYKKDFLCGLGIT) lie on the Cytoplasmic side of the membrane. The helical transmembrane segment at 458 to 478 (LISWFTSLVTVLIIAVFISLI) threads the bilayer. The Lumenal portion of the chain corresponds to 479–489 (GQSLSWYNHFY). The helical transmembrane segment at 490–510 (VSVCLYGTATVAKIILIHTLA) threads the bilayer. Residues 511-519 (KRFYYMNAS) are Cytoplasmic-facing. Residues 520 to 540 (AQYLGEVFFDISLFVHCCFLV) traverse the membrane as a helical segment. A topological domain (lumenal) is located at residue Thr541. Residues 542-562 (LTYQGLCSAFISAVWVAFPLL) traverse the membrane as a helical segment. Residues 563-579 (TKLCVHKDFKQHGAQGK) lie on the Cytoplasmic side of the membrane. The chain crosses the membrane as a helical span at residues 580–600 (FIAFYLLGMFIPYLYALYLIW). At 601-621 (AVFEMFTPILGRSGSEIPPDV) the chain is on the lumenal side. The chain crosses the membrane as a helical span at residues 622-642 (VLASILAGCTMILSSYFINFI). Over 643-651 (YLAKSTKKT) the chain is Cytoplasmic. A helical transmembrane segment spans residues 652–672 (MLTLTLVCAITFLLVCSGTFF). Residues 673–904 (PYSSNPANPK…WVCTYDLFVF (232 aa)) are Lumenal-facing. An N-linked (GlcNAc...) asparagine glycan is attached at Asn730.

The protein belongs to the peptidase M28 family. The cofactor is Zn(2+).

It localises to the endoplasmic reticulum membrane. Functionally, within the ovary, required for the organization of somatic cells and oocytes into discrete follicular structures. In Homo sapiens (Human), this protein is Endoplasmic reticulum metallopeptidase 1.